The primary structure comprises 311 residues: MVDALNVGVNLEAFSQAIHCIQALRSSVTRVFDCLKDGMKNKESQEARERTFVSEFQDNLHSVNGDLNELERLSNLVGKPSENLPLHNSGLLSLDPVHDKTPLYSQLLQAYKWSNKLQFHAGLASGLLNQQSLKRSAIQMGVSTKRRPKVQPTTLALPPQYIDDVISRIDRMFPEMTIQLSRPNGSSAILLVILGKVLKVIVVMRSLFIDRTIVKGYTENVYTEDGKLDIWSKSNYQVFQKVTDHATTALLHYQLPQMPDVVVRSFMTWLRSYIKLFQAPCQRCGKFLQDGLPPTWRDFRTLESFHDSCRQ.

The protein belongs to the Mediator complex subunit 27 family. In terms of assembly, component of the Mediator complex.

The protein resides in the nucleus. Functionally, component of the Mediator complex, a coactivator involved in the regulated transcription of nearly all RNA polymerase II-dependent genes. Mediator functions as a bridge to convey information from gene-specific regulatory proteins to the basal RNA polymerase II transcription machinery. Mediator is recruited to promoters by direct interactions with regulatory proteins and serves as a scaffold for the assembly of a functional preinitiation complex with RNA polymerase II and the general transcription factors. The protein is Mediator of RNA polymerase II transcription subunit 27-B (med27-b) of Xenopus laevis (African clawed frog).